Here is a 637-residue protein sequence, read N- to C-terminus: Threonine--tRNA ligase (637 aa).

Residues 1-65 (MIAIQLPDGS…EADEALSIIT (65 aa)) enclose the TGS domain. Residues 246-537 (DHRKLGRELD…LIEEHAGALP (292 aa)) are catalytic. Cysteine 337, histidine 388, and histidine 514 together coordinate Zn(2+).

Belongs to the class-II aminoacyl-tRNA synthetase family. Homodimer. The cofactor is Zn(2+).

It is found in the cytoplasm. It catalyses the reaction tRNA(Thr) + L-threonine + ATP = L-threonyl-tRNA(Thr) + AMP + diphosphate + H(+). Catalyzes the attachment of threonine to tRNA(Thr) in a two-step reaction: L-threonine is first activated by ATP to form Thr-AMP and then transferred to the acceptor end of tRNA(Thr). Also edits incorrectly charged L-seryl-tRNA(Thr). In Leptothrix cholodnii (strain ATCC 51168 / LMG 8142 / SP-6) (Leptothrix discophora (strain SP-6)), this protein is Threonine--tRNA ligase.